The sequence spans 111 residues: Beta-microseminoprotein (111 aa).

The N-terminal stretch at 1–20 (MKFLLGTLVVLATFVTLCNS) is a signal peptide. Residue Gln21 is modified to Pyrrolidone carboxylic acid. Cystine bridges form between Cys22–Cys67, Cys35–Cys59, Cys54–Cys90, Cys57–Cys66, and Cys81–Cys104.

It belongs to the beta-microseminoprotein family. Homodimer; Interacts with PI16. In terms of tissue distribution, corpora lutea, mostly in the luteal cells surrounding blood vessels.

It is found in the secreted. The chain is Beta-microseminoprotein (MSMB) from Sus scrofa (Pig).